Here is a 122-residue protein sequence, read N- to C-terminus: Serum amyloid A-1 protein (122 aa).

The first 19 residues, 1–19 (MKLLTSLVFCSLLLGVCHG), serve as a signal peptide directing secretion. The interval 20 to 45 (GFFSFVHEAFQGAGDMWRAYTDMKEA) is important for amyloid formation. Residues 91-108 (HEDTIADQEANRHGRSGK) show a composition bias toward basic and acidic residues. The disordered stretch occupies residues 91-122 (HEDTIADQEANRHGRSGKDPNYYRPPGLPDKY).

This sequence belongs to the SAA family. Homohexamer; dimer of trimers. Can form amyloid fibrils after partial proteolysis; the native, undenatured protein does not form amyloid fibrils (in vitro). Apolipoprotein of the HDL complex. Binds to heparin. As to expression, detected in blood plasma (at protein level). Detected in liver.

It is found in the secreted. Functionally, major acute phase protein. The protein is Serum amyloid A-1 protein (Saa1) of Mus musculus (Mouse).